Here is a 306-residue protein sequence, read N- to C-terminus: Protoheme IX farnesyltransferase (306 aa).

9 helical membrane-spanning segments follow: residues 32 to 52 (VVQLIVFCAFIGMVLAVPGMP), 57 to 77 (WALMAVASAGIWLVAGAAAAF), 108 to 128 (LLFSALLCAAGSALLYWWVNP), 129 to 149 (LTMWLTFATFVGYAVIYTVIL), 157 to 177 (IVIGGASGAMPPVLGWAAMTG), 183 to 203 (ALILFLIIFLWTPPHFWALAL), 230 to 250 (VFLYTLILFAGCLMPFVYGMS), 252 to 272 (WIYLAAAVVLSAGFCLYGFRL), and 285 to 305 (FRFSLIHLSLLFAALLVDHYL).

Belongs to the UbiA prenyltransferase family. Protoheme IX farnesyltransferase subfamily.

It is found in the cell inner membrane. It catalyses the reaction heme b + (2E,6E)-farnesyl diphosphate + H2O = Fe(II)-heme o + diphosphate. It participates in porphyrin-containing compound metabolism; heme O biosynthesis; heme O from protoheme: step 1/1. Converts heme B (protoheme IX) to heme O by substitution of the vinyl group on carbon 2 of heme B porphyrin ring with a hydroxyethyl farnesyl side group. The protein is Protoheme IX farnesyltransferase of Acidovorax ebreus (strain TPSY) (Diaphorobacter sp. (strain TPSY)).